The primary structure comprises 320 residues: PUP1 protein homolog (320 aa).

2 consecutive transmembrane segments (helical) span residues 66-85 and 100-119; these read MWGG…AYRY and FVLG…RSMY. Residues 205 to 320 are disordered; it reads GGVFNGSPFM…QSGRYGGNRS (116 aa). S230 is subject to Phosphoserine. Over residues 253–266 the composition is skewed to polar residues; sequence GDNSSSSSWENIRN. Residues 267–284 are compositionally biased toward basic and acidic residues; the sequence is TSRDQSQESDASVDHESD.

It belongs to the PUP1 family.

The protein resides in the mitochondrion membrane. The polypeptide is PUP1 protein homolog (Saccharomyces cerevisiae (strain ATCC 204508 / S288c) (Baker's yeast)).